A 241-amino-acid polypeptide reads, in one-letter code: Reduced meiotic recombination protein 1 (241 aa).

Belongs to the RMR1 family. In terms of processing, sumoylated.

It is found in the cytoplasm. The protein resides in the nucleus. Its function is as follows. Required for normal levels of gene conversion events during meiosis. The sequence is that of Reduced meiotic recombination protein 1 (RMR1) from Saccharomyces cerevisiae (strain ATCC 204508 / S288c) (Baker's yeast).